A 518-amino-acid polypeptide reads, in one-letter code: Myosin-binding protein 7 (518 aa).

The 99-residue stretch at 69-167 (NELELLRETV…ALTFEAQAYK (99 aa)) folds into the GTD-binding domain. The interval 276–350 (VVGQSPRHQR…DSSEIGDNDM (75 aa)) is disordered. Positions 291–301 (STGSASSLLGT) are enriched in low complexity. A compositionally biased stretch (polar residues) spans 310–320 (SNDSPRSNNGS). A Phosphoserine modification is found at Ser-385. Residues 399–431 (EISKLYMRLQALEADRESMRQAIMSMRTEKAQM) adopt a coiled-coil conformation. The helical transmembrane segment at 458 to 477 (IIGAFNFISVFKWITSFVFW) threads the bilayer.

As to quaternary structure, interacts with myosin XI-I.

Its subcellular location is the endomembrane system. Functionally, membrane-anchored myosin receptors that define a distinct, plant-specific transport vesicle compartment. In Arabidopsis thaliana (Mouse-ear cress), this protein is Myosin-binding protein 7.